The primary structure comprises 497 residues: ATP-dependent RNA helicase CshA (497 aa).

A Q motif motif is present at residues 1–29 (MKFSELGLSDSLLKAIKRSGYEEATPIQE). The region spanning 32–202 (IPMVLEGKDV…VQFMSDPETV (171 aa)) is the Helicase ATP-binding domain. Position 45–52 (45–52 (AQTGTGKT)) interacts with ATP. The short motif at 150–153 (DEAD) is the DEAD box element. In terms of domain architecture, Helicase C-terminal spans 228 to 373 (DIMTRLIDVQ…PLKPPTAEEA (146 aa)). A disordered region spans residues 425–497 (AASEVPVKIT…SFNIRHRKEN (73 aa)). The span at 448–458 (RNGNRNNSHGG) shows a compositional bias: low complexity. Composition is skewed to basic residues over residues 459–473 (NHYR…QHGS) and 481–497 (KSHS…RKEN).

It belongs to the DEAD box helicase family. CshA subfamily. In terms of assembly, oligomerizes, may be a member of the RNA degradosome.

The protein resides in the cytoplasm. It is found in the cell membrane. The catalysed reaction is ATP + H2O = ADP + phosphate + H(+). In terms of biological role, DEAD-box RNA helicase possibly involved in RNA degradation. Unwinds dsRNA in both 5'- and 3'-directions, has RNA-dependent ATPase activity. Over-expression leads to cell aggregation. The polypeptide is ATP-dependent RNA helicase CshA (Limosilactobacillus reuteri (Lactobacillus reuteri)).